The following is a 1139-amino-acid chain: Integrin alpha ina-1 (1139 aa).

The N-terminal stretch at 1–19 (MRECIISWTLLLCLSCVKS) is a signal peptide. At 20–1084 (FNLDVNAPIY…PTIGDSRPIP (1065 aa)) the chain is on the extracellular side. An FG-GAP 1 repeat occupies 21 to 85 (NLDVNAPIYR…CDINTFYNGG (65 aa)). 2 N-linked (GlcNAc...) asparagine glycosylation sites follow: asparagine 108 and asparagine 136. 6 FG-GAP repeats span residues 111-171 (RGRT…LQST), 180-231 (LPTT…IFDS), 242-302 (NGDM…SSSK), 307-370 (EDKF…QRKQ), 378-438 (HPPK…IEKF), and 448-510 (GNDL…MEKR). N-linked (GlcNAc...) asparagine glycosylation is present at asparagine 313. N-linked (GlcNAc...) asparagine glycosylation is found at asparagine 580, asparagine 788, asparagine 851, and asparagine 1026. Residues 1085–1106 (WWIYVIAAVIGVLILSLIIICL) traverse the membrane as a helical segment. The Cytoplasmic segment spans residues 1107–1139 (SKCGFFKRNRLDQPSLYTAQLKHEREEWADTGL).

It belongs to the integrin alpha chain family. As to quaternary structure, heterodimer of an alpha and a beta subunit. Alpha ina-1 associates with beta pat-3. Interacts (via cytoplasmic domain) with src-1 (when phosphorylated at 'Tyr-416').

The protein localises to the membrane. Its subcellular location is the cell projection. The protein resides in the phagocytic cup. It localises to the cytoplasmic vesicle. It is found in the phagosome membrane. In terms of biological role, plays a role in cell migration, axon fasciculation, and morphogenesis. During gonad morphogenesis, involved in distal tip cell (DTC)-mediated guidance of gonad elongation, in maintaining their sharp tapering morphology and in their migration. Involved in the anterior-posterior positioning of QR neuroblast descendants by regulating the migratory speed of QR.p. Probably by acting as a receptor for apoptotic cells, plays a role in the clearance of apoptotic cells during mid-embryogenesis. This Caenorhabditis elegans protein is Integrin alpha ina-1 (ina-1).